A 60-amino-acid chain; its full sequence is Large ribosomal subunit protein uL30 (60 aa).

Belongs to the universal ribosomal protein uL30 family. In terms of assembly, part of the 50S ribosomal subunit.

This chain is Large ribosomal subunit protein uL30, found in Salinispora tropica (strain ATCC BAA-916 / DSM 44818 / JCM 13857 / NBRC 105044 / CNB-440).